Consider the following 296-residue polypeptide: NAD kinase (296 aa).

Residue Asp-78 is the Proton acceptor of the active site. NAD(+) contacts are provided by residues 78–79, 152–153, Arg-180, Asp-182, and Gln-251; these read DG and ND.

Belongs to the NAD kinase family. A divalent metal cation is required as a cofactor.

The protein resides in the cytoplasm. The enzyme catalyses NAD(+) + ATP = ADP + NADP(+) + H(+). Its function is as follows. Involved in the regulation of the intracellular balance of NAD and NADP, and is a key enzyme in the biosynthesis of NADP. Catalyzes specifically the phosphorylation on 2'-hydroxyl of the adenosine moiety of NAD to yield NADP. This chain is NAD kinase, found in Neisseria meningitidis serogroup C (strain 053442).